We begin with the raw amino-acid sequence, 79 residues long: Acyl carrier protein (79 aa).

The Carrier domain maps to 2–77 (SDIAERVKKI…DAVKFLEKNS (76 aa)). Serine 37 is modified (O-(pantetheine 4'-phosphoryl)serine).

Belongs to the acyl carrier protein (ACP) family. Post-translationally, 4'-phosphopantetheine is transferred from CoA to a specific serine of apo-ACP by AcpS. This modification is essential for activity because fatty acids are bound in thioester linkage to the sulfhydryl of the prosthetic group.

Its subcellular location is the cytoplasm. It participates in lipid metabolism; fatty acid biosynthesis. In terms of biological role, carrier of the growing fatty acid chain in fatty acid biosynthesis. This is Acyl carrier protein from Methylobacterium radiotolerans (strain ATCC 27329 / DSM 1819 / JCM 2831 / NBRC 15690 / NCIMB 10815 / 0-1).